Consider the following 120-residue polypeptide: NAD(P)H-quinone oxidoreductase subunit 3, chloroplastic (120 aa).

Transmembrane regions (helical) follow at residues 9–29, 64–84, and 88–108; these read IFWAFLIISSAIPVLAFLISG, MFALVFVVFDVETVFLYPWAM, and VLGVSAFIEALIFVLILILGL.

It belongs to the complex I subunit 3 family. In terms of assembly, NDH is composed of at least 16 different subunits, 5 of which are encoded in the nucleus.

The protein localises to the plastid. It localises to the chloroplast thylakoid membrane. It carries out the reaction a plastoquinone + NADH + (n+1) H(+)(in) = a plastoquinol + NAD(+) + n H(+)(out). The enzyme catalyses a plastoquinone + NADPH + (n+1) H(+)(in) = a plastoquinol + NADP(+) + n H(+)(out). NDH shuttles electrons from NAD(P)H:plastoquinone, via FMN and iron-sulfur (Fe-S) centers, to quinones in the photosynthetic chain and possibly in a chloroplast respiratory chain. The immediate electron acceptor for the enzyme in this species is believed to be plastoquinone. Couples the redox reaction to proton translocation, and thus conserves the redox energy in a proton gradient. This chain is NAD(P)H-quinone oxidoreductase subunit 3, chloroplastic, found in Olimarabidopsis pumila (Dwarf rocket).